The primary structure comprises 121 residues: MDKILGASFLVLWLQLCWVSGQQKEKSDQQQVKQSPQSLIVQKGGISIINCAYENTAFDYFPWYQQFPGKGPALLIAIRPDVSEKKEGRFTISFNKSAKQFSSHIMDSQPGDSATYFCAAS.

The first 21 residues, 1–21, serve as a signal peptide directing secretion; it reads MDKILGASFLVLWLQLCWVSG. The Ig-like domain occupies 30-121; that stretch reads QQVKQSPQSL…DSATYFCAAS (92 aa). A disulfide bridge connects residues Cys51 and Cys118. N-linked (GlcNAc...) asparagine glycosylation occurs at Asn95.

As to quaternary structure, alpha-beta TR is a heterodimer composed of an alpha and beta chain; disulfide-linked. The alpha-beta TR is associated with the transmembrane signaling CD3 coreceptor proteins to form the TR-CD3 (TcR or TCR). The assembly of alpha-beta TR heterodimers with CD3 occurs in the endoplasmic reticulum where a single alpha-beta TR heterodimer associates with one CD3D-CD3E heterodimer, one CD3G-CD3E heterodimer and one CD247 homodimer forming a stable octameric structure. CD3D-CD3E and CD3G-CD3E heterodimers preferentially associate with TR alpha and TR beta chains, respectively. The association of the CD247 homodimer is the last step of TcR assembly in the endoplasmic reticulum and is required for transport to the cell surface.

It is found in the cell membrane. In terms of biological role, v region of the variable domain of T cell receptor (TR) alpha chain that participates in the antigen recognition. Alpha-beta T cell receptors are antigen specific receptors which are essential to the immune response and are present on the cell surface of T lymphocytes. Recognize peptide-major histocompatibility (MH) (pMH) complexes that are displayed by antigen presenting cells (APC), a prerequisite for efficient T cell adaptive immunity against pathogens. Binding of alpha-beta TR to pMH complex initiates TR-CD3 clustering on the cell surface and intracellular activation of LCK that phosphorylates the ITAM motifs of CD3G, CD3D, CD3E and CD247 enabling the recruitment of ZAP70. In turn ZAP70 phosphorylates LAT, which recruits numerous signaling molecules to form the LAT signalosome. The LAT signalosome propagates signal branching to three major signaling pathways, the calcium, the mitogen-activated protein kinase (MAPK) kinase and the nuclear factor NF-kappa-B (NF-kB) pathways, leading to the mobilization of transcription factors that are critical for gene expression and essential for T cell growth and differentiation. The T cell repertoire is generated in the thymus, by V-(D)-J rearrangement. This repertoire is then shaped by intrathymic selection events to generate a peripheral T cell pool of self-MH restricted, non-autoaggressive T cells. Post-thymic interaction of alpha-beta TR with the pMH complexes shapes TR structural and functional avidity. This Homo sapiens (Human) protein is T cell receptor alpha variable 23/delta variable 6.